The sequence spans 560 residues: Oxygen-dependent choline dehydrogenase 1 (560 aa).

8-37 serves as a coordination point for FAD; that stretch reads DYIIIGAGSAGNVLATRLTEDPDVQVLLLE. Residue His-475 is the Proton acceptor of the active site.

The protein belongs to the GMC oxidoreductase family. The cofactor is FAD.

It carries out the reaction choline + A = betaine aldehyde + AH2. The catalysed reaction is betaine aldehyde + NAD(+) + H2O = glycine betaine + NADH + 2 H(+). The protein operates within amine and polyamine biosynthesis; betaine biosynthesis via choline pathway; betaine aldehyde from choline (cytochrome c reductase route): step 1/1. In terms of biological role, involved in the biosynthesis of the osmoprotectant glycine betaine. Catalyzes the oxidation of choline to betaine aldehyde and betaine aldehyde to glycine betaine at the same rate. The sequence is that of Oxygen-dependent choline dehydrogenase 1 from Chromohalobacter salexigens (strain ATCC BAA-138 / DSM 3043 / CIP 106854 / NCIMB 13768 / 1H11).